A 478-amino-acid polypeptide reads, in one-letter code: tRNA (guanine-N(7)-)-methyltransferase non-catalytic subunit TRM82 (478 aa).

WD repeat units follow at residues 14–53 (SSAD…VLDP), 73–113 (EQKF…GLQQ), 217–258 (GHVS…HIIE), and 263–301 (GHEE…LNEK).

Belongs to the WD repeat TRM82 family. As to quaternary structure, forms a heterodimer with the catalytic subunit TRM8.

The protein resides in the nucleus. It participates in tRNA modification; N(7)-methylguanine-tRNA biosynthesis. In terms of biological role, required for the formation of N(7)-methylguanine at position 46 (m7G46) in tRNA. In the complex, it is required to stabilize and induce conformational changes of the catalytic subunit. This Phaeosphaeria nodorum (strain SN15 / ATCC MYA-4574 / FGSC 10173) (Glume blotch fungus) protein is tRNA (guanine-N(7)-)-methyltransferase non-catalytic subunit TRM82.